The sequence spans 257 residues: Pimeloyl-[acyl-carrier protein] methyl ester esterase (257 aa).

The region spanning 16 to 240 (LVLIHGWGMN…EQASHAPFIS (225 aa)) is the AB hydrolase-1 domain. Substrate is bound by residues Trp22, 82-83 (SL), and 143-147 (FMALQ). The active-site Nucleophile is Ser82. Catalysis depends on residues Asp207 and His235. Position 235 (His235) interacts with substrate.

Belongs to the AB hydrolase superfamily. Carboxylesterase BioH family. In terms of assembly, monomer.

The protein localises to the cytoplasm. The catalysed reaction is 6-carboxyhexanoyl-[ACP] methyl ester + H2O = 6-carboxyhexanoyl-[ACP] + methanol + H(+). The protein operates within cofactor biosynthesis; biotin biosynthesis. In terms of biological role, the physiological role of BioH is to remove the methyl group introduced by BioC when the pimeloyl moiety is complete. It allows to synthesize pimeloyl-ACP via the fatty acid synthetic pathway through the hydrolysis of the ester bonds of pimeloyl-ACP esters. In Aliivibrio fischeri (strain ATCC 700601 / ES114) (Vibrio fischeri), this protein is Pimeloyl-[acyl-carrier protein] methyl ester esterase.